The chain runs to 507 residues: uncharacterized protein (507 aa).

Over residues 1–12 the composition is skewed to low complexity; the sequence is MEKSISSISKAS. The segment at 1 to 20 is disordered; it reads MEKSISSISKASMNSDEKLD. Helical transmembrane passes span 57-74, 100-120, 126-146, 157-177, 189-209, 221-241, 283-303, 326-346, 353-373, 379-399, 416-436, and 445-465; these read FDFRILPLLALLYLFNAL, IMISIFYIPFVLCAFPFSYLY, ARILPFFMLSFGAMSLCQAAV, WFLGMAESAVLPGVVYYLTTF, IFYAAANVSSAFGGLLAYGVF, YLFLIEGGVTFLCAIVIFLVL, VFKHPIAILWLLEEMALGVPL, LMTVAPAISGAIWLLVFAFIS, GIVLIAAISTTMIGFIVYGSI, IGVSYFACFLMTAGAAASSVL, VFTSVGVPLANVMGLVSANIF, and VPALGITAGFGGLGILLVASI.

Belongs to the major facilitator superfamily. Allantoate permease family.

It localises to the endoplasmic reticulum. It is found in the membrane. This is an uncharacterized protein from Schizosaccharomyces pombe (strain 972 / ATCC 24843) (Fission yeast).